Reading from the N-terminus, the 1087-residue chain is REKLEVQCQAEKVRDDLQKQVKALEIDVEEQVCRFIELEQEKNAELMDLRQQNQALEKQLEKMRKMDLRQQNQALEKQLEKMRKFLDEQAIDREHERDVFQQEIQKLEQQLKLVPRFQPISEHQTREVEQLTNHLKEKTDKCSELLLSKEQLQRDVQERNEEIEKLECRVRELEQALLSVQTLSKRWRTRNSFGAVEPKAELCLEVQLQAERDAIDRKEKEITNLEEQLEQFREELENKNEEVQQLHMQLEIQKKESTTRLQELEQENKLFKDEMEKLGFAIKESDAVSPQDQQVLFGKFAQIIHEKEVEIDRLNEQIIKLQQQLKITTDNKVIEEKNELIRDLEAQIECLMSDQERVRKNREEEIEQLNEVIEKLQQELANIDQKTSVDPSSLSEEADSLKHQLDKVIAEKLALEHQVETTNEEMAVTKNVLKETNFKMNQLTQELCSLKREREKMERIQSVPEKSVNMSVGDLSKDKPEMDLIPTEDALAQLETQTQLRSSEESSKVSLSSLETKLLQLESTVSTKDLELTQCYKQIQDMREQGRSETEMLQTKIVSLQKVLEEKVAAALVSQVQLEAVQEYVKLCADKPAVSSDPARTEVPGLSQLAGNTMESDVSALTWRISELESQLVEMHSSLISEKEQVEIAEKNALEKEKKLQELQKLVQDSETKQRERERQSRLHGDLGVLESTTSEESGVFGELEALRAESAAPKGELANYKELAEKLQEELLVKETNMASLPKELSHVRDQLTEAEDKLSHFSEKEDKTEVQEHGTICILEPCPGQIGESFASQTEGAVQVNSHTQTPQIPVRSVGIQTHSQSDSSPEEVAEIISRFTEKIEQMRELHAAEILDMESRHISETETLKREHCIAVQLLTEECASLKSLIQGLRMPEGSSVPELTHSNAYQTREVGSSDSGSDWGQGIYLTQSQGFDTASEARGEEGETSTDSFPKKIKGLLRAVHNEGMQVLSLTEGPCGDGEDYPGHQLSESWLEERRAYLSTISSLKDFITKMQVQREVEVYDSSQSHENISDWRGELLLALQQVFLRERSVLLAAFKTELTALGTRDAAGLLNCLEQRIPRTEY.

A coiled-coil region spans residues Glu5–Gln461. The PKA-RII subunit binding domain stretch occupies residues Ser559–Leu572. The stretch at Met614–Gln773 forms a coiled coil. Positions Val667–Gly685 are enriched in basic and acidic residues. Residues Val667–Glu691 are disordered.

As to quaternary structure, interacts with the regulatory region of protein kinase N (PKN), protein phosphatase 2A (PP2A), protein phosphatase 1 (PP1) and the immature non-phosphorylated form of PKC epsilon. Interacts with CIP4 and FNBP1. Interacts with chloride intracellular channel proteins CLIC1, CLIC4 and CLIC5. CSNK1D binding promotes its centrosomal subcellular location. Interacts with GM130/GOLGA2; leading to recruitment to the Golgi apparatus. Interacts with KCNQ1; targets protein kinase A (PKA) catalytic and regulatory subunits and protein phosphatase 1 (PP1), to the heterodimer KCNQ1-KCNE1. Interacts with PDE4DIP; this interaction stabilizes both proteins. In complex with PDE4DIP, recruits CAMSAP2 to the Golgi apparatus. Forms a pericentrosomal complex with CDK5RAP2, EB1/MAPRE1 and PDE4DIP; within this complex, MAPRE1 binding to CDK5RAP2 may be mediated by PDE4DIP. The interaction with PDE4DIP is isoform-specific. Interacts with MAPRE1 and MAPRE3. Interacts (via C-terminus) with CAMSAP2; this interaction is much stronger in the presence of PDE4DIP. Interacts with CAMSAP3. Interacts (via C-terminus) with the gamma-tubulin ring complex (gamma-TuRC), composed of gamma-tubulin, TUBGCP2, TUBGCP3, TUBGCP4, TUBGCP5 and TUBGCP6. Highly expressed in gastric parietal cells.

The protein resides in the golgi apparatus. It is found in the cytoplasm. Its subcellular location is the cytoskeleton. The protein localises to the microtubule organizing center. It localises to the centrosome. Functionally, scaffolding protein that assembles several protein kinases and phosphatases on the centrosome and Golgi apparatus. Required to maintain the integrity of the Golgi apparatus. Required for microtubule nucleation at the cis-side of the Golgi apparatus. Required for association of the centrosomes with the poles of the bipolar mitotic spindle during metaphase. In complex with PDE4DIP, recruits CAMSAP2 to the Golgi apparatus and tethers non-centrosomal minus-end microtubules to the Golgi, an important step for polarized cell movement. In complex with PDE4DIP, EB1/MAPRE1 and CDK5RAP2, contributes to microtubules nucleation and extension also from the centrosome to the cell periphery. The interaction with PDE4DIP is isoform-specific. In Oryctolagus cuniculus (Rabbit), this protein is A-kinase anchor protein 9 (AKAP9).